A 347-amino-acid chain; its full sequence is Ryncolin-2 (347 aa).

The signal sequence occupies residues 1–19; sequence MKPWAAFHLIFLVASSLEG. A disordered region spans residues 49-115; sequence LQSQPGIPGI…DKGDKGDKGD (67 aa). Positions 57-114 constitute a Collagen-like domain; the sequence is GIPGVPGINGSEGLKGDPGPQGLPGETGFDGIPGVAGPKGDKGDQGDKGDKGDKGDKG. Over residues 95–115 the composition is skewed to basic and acidic residues; the sequence is KGDKGDQGDKGDKGDKGDKGD. In terms of domain architecture, Fibrinogen C-terminal spans 121 to 341; sequence DCPPTDVEVR…YADMKIRPQQ (221 aa). Intrachain disulfides connect Cys-132/Cys-160 and Cys-284/Cys-297.

Belongs to the ficolin lectin family. Veficolin subfamily. In terms of processing, hydroxylated, possibly at Pro-74 and Pro-94. In terms of tissue distribution, expressed by the venom duct.

Its subcellular location is the secreted. Its function is as follows. Initiates complement activation and/or interferes in platelet aggregation and/or blood coagulation. The protein is Ryncolin-2 of Cerberus rynchops (Dog-faced water snake).